Here is a 515-residue protein sequence, read N- to C-terminus: Bifunctional purine biosynthesis protein PurH (515 aa).

An MGS-like domain is found at 1-145 (MTKRVLISVS…KNHASVTVVV (145 aa)).

Belongs to the PurH family.

The enzyme catalyses (6R)-10-formyltetrahydrofolate + 5-amino-1-(5-phospho-beta-D-ribosyl)imidazole-4-carboxamide = 5-formamido-1-(5-phospho-D-ribosyl)imidazole-4-carboxamide + (6S)-5,6,7,8-tetrahydrofolate. It carries out the reaction IMP + H2O = 5-formamido-1-(5-phospho-D-ribosyl)imidazole-4-carboxamide. Its pathway is purine metabolism; IMP biosynthesis via de novo pathway; 5-formamido-1-(5-phospho-D-ribosyl)imidazole-4-carboxamide from 5-amino-1-(5-phospho-D-ribosyl)imidazole-4-carboxamide (10-formyl THF route): step 1/1. It functions in the pathway purine metabolism; IMP biosynthesis via de novo pathway; IMP from 5-formamido-1-(5-phospho-D-ribosyl)imidazole-4-carboxamide: step 1/1. This is Bifunctional purine biosynthesis protein PurH from Streptococcus pneumoniae (strain JJA).